Consider the following 529-residue polypeptide: UDP-glucuronosyltransferase 2B18 (529 aa).

A signal peptide spans 1-21; the sequence is MSVKWTSVILLIQLSFYFSSG. N-linked (GlcNAc...) asparagine glycosylation is found at N67 and N68. The chain crosses the membrane as a helical span at residues 493 to 513; the sequence is VIGFLLACVATVIFIIMKCCL.

Belongs to the UDP-glycosyltransferase family. In terms of tissue distribution, expressed in liver, prostate, kidney, testis, adrenal, bile duct, bladder, colon, small intestine, cerebellum and pancreas.

The protein resides in the microsome membrane. The protein localises to the endoplasmic reticulum membrane. The catalysed reaction is glucuronate acceptor + UDP-alpha-D-glucuronate = acceptor beta-D-glucuronoside + UDP + H(+). In terms of biological role, UDPGT is of major importance in the conjugation and subsequent elimination of potentially toxic xenobiotics and endogenous compounds. This isozyme displays activity toward 3-hydroxyandrogens. It is principally active on C19 steroids having a hydroxyl group at position 3-alpha of the steroid molecule and also active on planar phenols and bile acids. This is UDP-glucuronosyltransferase 2B18 (UGT2B18) from Macaca fascicularis (Crab-eating macaque).